Here is a 236-residue protein sequence, read N- to C-terminus: UPF0257 lipoprotein YnfC (236 aa).

The first 16 residues, 1 to 16 (MKKPLLLTLLCMILAG), serve as a signal peptide directing secretion. Cys-17 carries the N-palmitoyl cysteine lipid modification. The S-diacylglycerol cysteine moiety is linked to residue Cys-17.

This sequence belongs to the UPF0257 family.

The protein resides in the cell membrane. In Salmonella schwarzengrund (strain CVM19633), this protein is UPF0257 lipoprotein YnfC.